Consider the following 723-residue polypeptide: LIM domain-binding protein 3 (723 aa).

The region spanning 1-84 is the PDZ domain; the sequence is MSYSVTLTGP…NLSLTLQKSK (84 aa). Serine 44, serine 98, and aspartate 112 each carry phosphoserine. Disordered stretches follow at residues 89-134 and 164-193; these read ISTT…GALE and SPVA…RQYN. Position 119 is a phosphothreonine (threonine 119). Residues serine 121 and serine 123 each carry the phosphoserine modification. At serine 214 the chain carries Phosphoserine. Arginine 216 bears the Omega-N-methylarginine mark. Phosphoserine occurs at positions 220, 251, and 288. Disordered regions lie at residues 280-423 and 436-525; these read GTEY…YSPT and SPAP…PQVT. Alanine 291 carries the omega-N-methylarginine modification. The span at 309-376 shows a compositional bias: low complexity; that stretch reads ATSPLLPASA…AAAASPAPSA (68 aa). Isoleucine 327 carries the post-translational modification Phosphoserine. Serine 330 carries the omega-N-methylarginine modification. A compositionally biased stretch (pro residues) spans 436 to 466; sequence SPAPTYTPSPAPTYSPSPAPAYTPSPAPNYT. Polar residues predominate over residues 490 to 509; sequence DSFSQKFAPGKSTTTVSKQT. Residues arginine 512 and arginine 529 each carry the omega-N-methylarginine modification. LIM zinc-binding domains are found at residues 545 to 603, 604 to 663, and 664 to 723; these read PLCG…QFFA, PICA…LFST, and KCHG…AINV.

As to quaternary structure, interacts via its LIM domains with various PKC isoforms. Interacts via its PDZ domain with the ACTN2 C-terminal region. Interacts with MYOZ1, MYOZ2 and MYOZ3. As to expression, expressed primarily in adult heart and skeletal muscle, and detected at lower levels in lung. Isoforms are expressed in a tissue-specific manner. Isoform 1, isoform 3 and isoform 5 are expressed in heart, whereas isoform 2, isoform 4 and isoform 6 are expressed in skeletal muscle.

Its subcellular location is the cytoplasm. The protein localises to the perinuclear region. The protein resides in the cell projection. It is found in the pseudopodium. It localises to the cytoskeleton. Its subcellular location is the myofibril. The protein localises to the sarcomere. The protein resides in the z line. Its function is as follows. May function as an adapter in striated muscle to couple protein kinase C-mediated signaling via its LIM domains to the cytoskeleton. This is LIM domain-binding protein 3 from Mus musculus (Mouse).